The primary structure comprises 103 residues: Cystatin-A1 (103 aa).

Positions 51-55 match the Secondary area of contact motif; sequence QVVAG.

Belongs to the cystatin family.

It is found in the cytoplasm. This is an intracellular thiol proteinase inhibitor. This is Cystatin-A1 from Sus scrofa (Pig).